The chain runs to 58 residues: Small ribosomal subunit protein bS21 (58 aa).

Belongs to the bacterial ribosomal protein bS21 family.

This Lactobacillus acidophilus (strain ATCC 700396 / NCK56 / N2 / NCFM) protein is Small ribosomal subunit protein bS21.